Consider the following 89-residue polypeptide: RNA-binding protein Hfq (89 aa).

A Sm domain is found at 14-73 (DPYLNALRKEKINVAIYLVNGVKLQGRVDSFDQFVVLLRSNVTQMVYKHAISTIVPARDP).

This sequence belongs to the Hfq family. Homohexamer.

Its function is as follows. RNA chaperone that binds small regulatory RNA (sRNAs) and mRNAs to facilitate mRNA translational regulation in response to envelope stress, environmental stress and changes in metabolite concentrations. Also binds with high specificity to tRNAs. In Hydrogenovibrio crunogenus (strain DSM 25203 / XCL-2) (Thiomicrospira crunogena), this protein is RNA-binding protein Hfq.